A 93-amino-acid chain; its full sequence is Small ribosomal subunit protein uS19 (93 aa).

The protein belongs to the universal ribosomal protein uS19 family.

Its function is as follows. Protein S19 forms a complex with S13 that binds strongly to the 16S ribosomal RNA. The protein is Small ribosomal subunit protein uS19 of Mycobacteroides abscessus (strain ATCC 19977 / DSM 44196 / CCUG 20993 / CIP 104536 / JCM 13569 / NCTC 13031 / TMC 1543 / L948) (Mycobacterium abscessus).